The sequence spans 163 residues: Phosphopantetheine adenylyltransferase (163 aa).

Thr10 is a substrate binding site. ATP contacts are provided by residues 10–11 and His18; that span reads TF. Substrate is bound by residues Lys42, Leu75, and Arg89. Residues 90–92, Glu100, and 125–131 each bind ATP; these read GVR and YTYVASS.

Belongs to the bacterial CoaD family. In terms of assembly, homohexamer. Mg(2+) serves as cofactor.

It is found in the cytoplasm. It carries out the reaction (R)-4'-phosphopantetheine + ATP + H(+) = 3'-dephospho-CoA + diphosphate. The protein operates within cofactor biosynthesis; coenzyme A biosynthesis; CoA from (R)-pantothenate: step 4/5. Reversibly transfers an adenylyl group from ATP to 4'-phosphopantetheine, yielding dephospho-CoA (dPCoA) and pyrophosphate. In Pelodictyon phaeoclathratiforme (strain DSM 5477 / BU-1), this protein is Phosphopantetheine adenylyltransferase.